Reading from the N-terminus, the 444-residue chain is Exodeoxyribonuclease 7 large subunit (444 aa).

It belongs to the XseA family. Heterooligomer composed of large and small subunits.

It is found in the cytoplasm. It carries out the reaction Exonucleolytic cleavage in either 5'- to 3'- or 3'- to 5'-direction to yield nucleoside 5'-phosphates.. In terms of biological role, bidirectionally degrades single-stranded DNA into large acid-insoluble oligonucleotides, which are then degraded further into small acid-soluble oligonucleotides. The sequence is that of Exodeoxyribonuclease 7 large subunit from Rickettsia akari (strain Hartford).